Here is a 147-residue protein sequence, read N- to C-terminus: Large ribosomal subunit protein bL9 (147 aa).

This sequence belongs to the bacterial ribosomal protein bL9 family.

Its function is as follows. Binds to the 23S rRNA. The polypeptide is Large ribosomal subunit protein bL9 (Geobacter sp. (strain M21)).